The following is a 179-amino-acid chain: Large ribosomal subunit protein bL9 (179 aa).

The disordered stretch occupies residues 155–179 (KPEEAPVPVAEEPTAETEQAEVAAE). The segment covering 167 to 179 (PTAETEQAEVAAE) has biased composition (acidic residues).

It belongs to the bacterial ribosomal protein bL9 family.

Functionally, binds to the 23S rRNA. The chain is Large ribosomal subunit protein bL9 from Porphyromonas gingivalis (strain ATCC BAA-308 / W83).